A 951-amino-acid polypeptide reads, in one-letter code: Valine--tRNA ligase (951 aa).

The 'HIGH' region motif lies at 42–52 (PNVTGSLHMGH). The short motif at 554–558 (KMSKS) is the 'KMSKS' region element. Residue K557 coordinates ATP. Residues 882–951 (LIDKDAELAR…EEQKATIAAL (70 aa)) adopt a coiled-coil conformation.

It belongs to the class-I aminoacyl-tRNA synthetase family. ValS type 1 subfamily. Monomer.

Its subcellular location is the cytoplasm. It catalyses the reaction tRNA(Val) + L-valine + ATP = L-valyl-tRNA(Val) + AMP + diphosphate. Catalyzes the attachment of valine to tRNA(Val). As ValRS can inadvertently accommodate and process structurally similar amino acids such as threonine, to avoid such errors, it has a 'posttransfer' editing activity that hydrolyzes mischarged Thr-tRNA(Val) in a tRNA-dependent manner. This is Valine--tRNA ligase from Vibrio vulnificus (strain CMCP6).